Reading from the N-terminus, the 327-residue chain is MAAPRSCALWSYCGRGWSWAMRGCQLLGLRSSWPGAPLSARLLPQEKRATETHFGSETVSEEEKGGKVYQVFESVAKKYDVMNDMMSLGIHRVWKDLLLWKMRPLPGTQLLDVAGGTGDIAFRFLNYVQSQHQRKQKRQLRAQQNLSWEEIAKEYQNEEDSLGGSRVVMCDINKEMLKVGKQKALAQGYRAGLAWVLGDAEELPFDDDKFDIYTIAFGIRNVTHIDQALQEAHRVLKPGGRFLCLEFSQVNNPLISRLYDLYSFQVIPVLGEVIAGDWKSYQYLVESIRRFPSQEEFKEMIEDAGFHKVTYESLTSGIVAIHSGFKL.

The transit peptide at 1 to 49 (MAAPRSCALWSYCGRGWSWAMRGCQLLGLRSSWPGAPLSARLLPQEKRA) directs the protein to the mitochondrion. S-adenosyl-L-methionine contacts are provided by residues threonine 117, aspartate 171, and 199 to 200 (DA).

It belongs to the class I-like SAM-binding methyltransferase superfamily. MenG/UbiE family. Component of a multi-subunit COQ enzyme complex, composed of at least COQ3, COQ4, COQ5, COQ6, COQ7 and COQ9. Interacts with PYURF; the interaction is direct, stabilizes COQ5 protein and associates PYURF with COQ enzyme complex.

Its subcellular location is the mitochondrion inner membrane. It carries out the reaction 2-methoxy-6-(all-trans-decaprenyl)benzene-1,4-diol + S-adenosyl-L-methionine = 5-methoxy-2-methyl-3-(all-trans-decaprenyl)benzene-1,4-diol + S-adenosyl-L-homocysteine + H(+). Its pathway is cofactor biosynthesis; ubiquinone biosynthesis. Methyltransferase required for the conversion of 2-decaprenyl-6-methoxy-1,4-benzoquinol (DDMQH2) to 2-decaprenyl-3-methyl-6-methoxy-1,4-benzoquinol (DMQH2). The chain is 2-methoxy-6-polyprenyl-1,4-benzoquinol methylase, mitochondrial from Pongo abelii (Sumatran orangutan).